The chain runs to 568 residues: Circadian clock protein KaiC2 (568 aa).

KaiC domains follow at residues 11–250 and 251–485; these read IKCP…SVSQ and ERIS…LTGT. Phosphoserine; by autocatalysis occurs at positions 423 and 424.

The protein belongs to the KaiC family. Multimerizes, probably forming homohexamers, no interaction with KaiC1 or KaiC3 is seen.

The enzyme catalyses L-seryl-[protein] + ATP = O-phospho-L-seryl-[protein] + ADP + H(+). It carries out the reaction L-threonyl-[protein] + ATP = O-phospho-L-threonyl-[protein] + ADP + H(+). The catalysed reaction is ATP + H2O = ADP + phosphate + H(+). Functionally, autophosphorylates independently of KaiA. The sequence is that of Circadian clock protein KaiC2 from Synechocystis sp. (strain ATCC 27184 / PCC 6803 / Kazusa).